Consider the following 336-residue polypeptide: L-rhamnono-gamma-lactonase (336 aa).

The protein belongs to the metallo-dependent hydrolases superfamily. The cofactor is a divalent metal cation.

The enzyme catalyses L-rhamnono-1,4-lactone + H2O = L-rhamnonate + H(+). With respect to regulation, inhibited by Zn(2+), Fe(2+) and Cu(2+), but not by EDTA. Functionally, hydrolase with high substrate specificity for L-rhamnono-1,4-lactone. Catalyzes the second step in an alternative pathway for rhamnose utilization that does not involve phosphorylated intermediates. The chain is L-rhamnono-gamma-lactonase (LRA2) from Scheffersomyces stipitis (strain ATCC 58785 / CBS 6054 / NBRC 10063 / NRRL Y-11545) (Yeast).